A 435-amino-acid polypeptide reads, in one-letter code: Monodehydroascorbate reductase 3, cytosolic (435 aa).

Residues 14-17 (GGVA), glutamate 41, arginine 48, lysine 53, isoleucine 96, and 147-148 (RE) contribute to the FAD site. Residues 172–178 (GGYIGLE), glutamate 196, arginine 202, and glycine 261 each bind NAD(+). 174 to 178 (YIGLE) lines the NADP(+) pocket. NADP(+) is bound by residues arginine 202 and glycine 261. Aspartate 298 contributes to the FAD binding site. 314-315 (EH) is a binding site for NAD(+). 314-315 (EH) contributes to the NADP(+) binding site. Valine 316 serves as a coordination point for FAD. Residue arginine 320 coordinates L-ascorbate. Tyrosine 349 is an FAD binding site. Residue tyrosine 349 participates in NAD(+) binding. Tyrosine 349 lines the NADP(+) pocket. Arginine 351 contributes to the L-ascorbate binding site.

Belongs to the FAD-dependent oxidoreductase family. FAD serves as cofactor.

It localises to the cytoplasm. The catalysed reaction is 2 monodehydro-L-ascorbate radical + NADH + H(+) = 2 L-ascorbate + NAD(+). Catalyzes the conversion of monodehydroascorbate to ascorbate, oxidizing NADH in the process. Ascorbate is a major antioxidant against reactive oxygen species (ROS) and nitric oxide (NO). Can use NADPH as electron donor, but possesses lower activity compared to NADH as electron donor. The chain is Monodehydroascorbate reductase 3, cytosolic from Oryza sativa subsp. japonica (Rice).